The following is a 339-amino-acid chain: Trace amine-associated receptor 1 (339 aa).

Over 1–24 (MMPFCHNIINISCVKNNWSNDVRA) the chain is Extracellular. 3 disulfides stabilise this stretch: Cys5-Cys178, Cys13-Cys88, and Cys96-Cys182. N-linked (GlcNAc...) asparagine glycosylation is found at Asn10 and Asn17. A helical membrane pass occupies residues 25 to 49 (SLYSLMVLIILTTLVGNLIVIVSIS). Topologically, residues 50 to 59 (HFKQLHTPTN) are cytoplasmic. A helical membrane pass occupies residues 60–81 (WLIHSMATVDFLLGCLVMPYSM). The Extracellular segment spans residues 82–96 (VRSAEHCWYFGEVFC). Residues 97 to 119 (KIHTSTDIMLSSASIFHLSFISI) form a helical membrane-spanning segment. Asp103 contacts 2-phenylethylamine. Residues 120–139 (DRYYAVCDPLRYKAKMNILV) are Cytoplasmic-facing. Residues 140–161 (ICVMIFISWSVPAVFAFGMIFL) traverse the membrane as a helical segment. Over 162 to 188 (ELNFKGAEEIYYKHVHCRGGCSVFFSK) the chain is Extracellular. Residues 175–186 (HVHCRGGCSVFF) are extracellular Loop 2 (ECL2). A helical membrane pass occupies residues 189–211 (ISGVLTFMTSFYIPGSIMLCVYY). Residues 212-249 (RIYLIAKEQARLISDANQKLQIGLEMKNGISQSKERKA) are Cytoplasmic-facing. Residues 250 to 273 (VKTLGIVMGVFLICWCPFFICTVM) form a helical membrane-spanning segment. Residues 274–286 (DPFLHYIIPPTLN) are Extracellular-facing. A helical transmembrane segment spans residues 287-307 (DVLIWFGYLNSTFNPMVYAFF). The Cytoplasmic portion of the chain corresponds to 308-339 (YPWFRKALKMMLFGKIFQKDSSRCKLFLELSS).

This sequence belongs to the G-protein coupled receptor 1 family. Expressed at low level in both the central and peripheral nervous system. Moderately expressed in stomach. Low levels in amygdala, kidney, and lung, and small intestine. Trace amounts in cerebellum, dorsal root ganglia, hippocampus, hypothalamus, liver, medulla, pancreas, pituitary, pontine reticular formation, prostate, skeletal muscle and spleen.

It localises to the endomembrane system. Its subcellular location is the endoplasmic reticulum membrane. The protein localises to the cell membrane. With respect to regulation, activated by SEP-363856 small molecule: IHCH-7179 acts both as an agonist activator for HTR1A and TAAR1. Functionally, intracellular G-protein coupled receptor for trace amines, which recognizes endogenous amine-containing metabolites such as beta-phenylethylamine (beta-PEA), 3-iodothyronamine (T1AM), isoamylamine (IAA), cadaverine (CAD), cyclohexylamine (CHA), p-tyramine (p-TYR), trimethylamine (TMA), octopamine and tryptamine. Also functions as a receptor for various drugs and psychoactive substances, such as amphetamine and methamphetamine. Unresponsive to classical biogenic amines, such as epinephrine and histamine and only partially activated by dopamine and serotonin. Expressed in both the central and peripheral nervous system: TAAR1 activation regulates the activity of several neurotransmitter signaling pathways by (1) decreasing the basal firing rates of the neurons involved and by (2) lowering the sensitivity of receptors to neurotransmitters. Ligand binding causes a conformation change that triggers signaling via guanine nucleotide-binding proteins (G proteins) and modulates the activity of downstream effectors. TAAR1 is coupled with different G(i)/G(o)-, G(s)- or G(q)/G(11) classes of G alpha proteins depending on the ligand. CAD-binding is coupled to G(i)/G(o) G alpha proteins and mediates inhibition of adenylate cyclase activity. T1AM- or beta-PEA-binding is coupled to G(s) G alpha proteins and mediates activation of adenylate cyclase activity. CHA- or IAA-binding is coupled to G(q)/G(11) G alpha proteins and activates phospholipase C-beta, releasing diacylglycerol (DAG) and inositol 1,4,5-trisphosphate (IP3) second messengers. TMA-binding is coupled with all three G(i)/G(o)-, G(s)- or G(q)/G(11) G alpha protein subtypes. Amphetamine-binding is coupled with G(s)- or G(12)/G(13) G alpha protein subtypes. This Homo sapiens (Human) protein is Trace amine-associated receptor 1.